The chain runs to 385 residues: Odorant receptor 82a (385 aa).

Topologically, residues 1–32 are cytoplasmic; that stretch reads MGRLFQLQEYCLRAMGHKDDMDSTDSTALSLK. Residues 33–53 traverse the membrane as a helical segment; sequence HISSLIFVISAQYPLISYVAY. Residues 54–62 lie on the Extracellular side of the membrane; it reads NRNDMEKVT. The helical transmembrane segment at 63 to 83 threads the bilayer; the sequence is ACLSVVFTNMLTVIKISTFLA. Residues 84 to 131 lie on the Cytoplasmic side of the membrane; that stretch reads NRKDFWEMIHRFRKMHEQSASHIPRYREGLDYVAEANKLASFLGRAYC. A helical membrane pass occupies residues 132 to 152; it reads VSCGLTGLYFMLGPIVKIGVC. The Extracellular portion of the chain corresponds to 153–186; that stretch reads RWHGTTCDKELPMPMKFPFNDLESPGYEVCFLYT. The chain crosses the membrane as a helical span at residues 187–207; sequence VLVTVVVVAYASAVDGLFISF. The Cytoplasmic portion of the chain corresponds to 208–257; the sequence is AINLRAHFQTLQRQIENWEFPSSEPDTQIRLKSIVEYHVLLLSLSRKLRS. A helical transmembrane segment spans residues 258–278; sequence IYTPTVMGQFVITSLQVGVII. Topologically, residues 279 to 290 are extracellular; the sequence is YQLVTNMDSVMD. The helical transmembrane segment at 291 to 311 threads the bilayer; it reads LLLYASFFGSIMLQLFIYCYG. Residues 312 to 357 are Cytoplasmic-facing; it reads GEIIKAESLQVDTAVRLSNWHLASPKTRTSLSLIILQSQKEVLIRA. A helical membrane pass occupies residues 358–378; that stretch reads GFFVASLANFVGICRTALSLI. Residues 379-385 are Extracellular-facing; it reads TLIKSIE.

Belongs to the insect chemoreceptor superfamily. Heteromeric odorant receptor channel (TC 1.A.69) family. Or1a subfamily. As to quaternary structure, interacts with Orco. Complexes exist early in the endomembrane system in olfactory sensory neurons (OSNs), coupling these complexes to the conserved ciliary trafficking pathway. Expressed in olfactory sensory neurons in the antenna.

It is found in the cell membrane. Functionally, odorant receptor which mediates acceptance or avoidance behavior, depending on its substrates. The odorant receptor repertoire encodes a large collection of odor stimuli that vary widely in identity, intensity, and duration. May form a complex with Orco to form odorant-sensing units, providing sensitive and prolonged odorant signaling and calcium permeability. This is Odorant receptor 82a (Or82a) from Drosophila melanogaster (Fruit fly).